The primary structure comprises 363 residues: UDP-N-acetylglucosamine--N-acetylmuramyl-(pentapeptide) pyrophosphoryl-undecaprenol N-acetylglucosamine transferase (363 aa).

UDP-N-acetyl-alpha-D-glucosamine contacts are provided by residues 13-15 (TGG), Asn-125, Arg-166, Ser-195, Ile-249, 268-273 (ALTVSE), and Gln-294.

It belongs to the glycosyltransferase 28 family. MurG subfamily.

It is found in the cell inner membrane. The enzyme catalyses di-trans,octa-cis-undecaprenyl diphospho-N-acetyl-alpha-D-muramoyl-L-alanyl-D-glutamyl-meso-2,6-diaminopimeloyl-D-alanyl-D-alanine + UDP-N-acetyl-alpha-D-glucosamine = di-trans,octa-cis-undecaprenyl diphospho-[N-acetyl-alpha-D-glucosaminyl-(1-&gt;4)]-N-acetyl-alpha-D-muramoyl-L-alanyl-D-glutamyl-meso-2,6-diaminopimeloyl-D-alanyl-D-alanine + UDP + H(+). The protein operates within cell wall biogenesis; peptidoglycan biosynthesis. Cell wall formation. Catalyzes the transfer of a GlcNAc subunit on undecaprenyl-pyrophosphoryl-MurNAc-pentapeptide (lipid intermediate I) to form undecaprenyl-pyrophosphoryl-MurNAc-(pentapeptide)GlcNAc (lipid intermediate II). The sequence is that of UDP-N-acetylglucosamine--N-acetylmuramyl-(pentapeptide) pyrophosphoryl-undecaprenol N-acetylglucosamine transferase from Cellvibrio japonicus (strain Ueda107) (Pseudomonas fluorescens subsp. cellulosa).